A 123-amino-acid chain; its full sequence is Large ribosomal subunit protein bL12 (123 aa).

It belongs to the bacterial ribosomal protein bL12 family. As to quaternary structure, homodimer. Part of the ribosomal stalk of the 50S ribosomal subunit. Forms a multimeric L10(L12)X complex, where L10 forms an elongated spine to which 2 to 4 L12 dimers bind in a sequential fashion. Binds GTP-bound translation factors.

Forms part of the ribosomal stalk which helps the ribosome interact with GTP-bound translation factors. Is thus essential for accurate translation. This is Large ribosomal subunit protein bL12 from Neisseria perflava.